Consider the following 260-residue polypeptide: Ribonuclease PH (260 aa).

Phosphate is bound by residues R88 and 126 to 128; that span reads GTR.

This sequence belongs to the RNase PH family. As to quaternary structure, homohexameric ring arranged as a trimer of dimers.

It carries out the reaction tRNA(n+1) + phosphate = tRNA(n) + a ribonucleoside 5'-diphosphate. Phosphorolytic 3'-5' exoribonuclease that plays an important role in tRNA 3'-end maturation. Removes nucleotide residues following the 3'-CCA terminus of tRNAs; can also add nucleotides to the ends of RNA molecules by using nucleoside diphosphates as substrates, but this may not be physiologically important. Probably plays a role in initiation of 16S rRNA degradation (leading to ribosome degradation) during starvation. In Mycolicibacterium gilvum (strain PYR-GCK) (Mycobacterium gilvum (strain PYR-GCK)), this protein is Ribonuclease PH.